Here is a 932-residue protein sequence, read N- to C-terminus: Probable serine/threonine-protein kinase clkA (932 aa).

The segment covering 1–10 (MDRFQTKRKT) has biased composition (basic residues). Disordered stretches follow at residues 1 to 21 (MDRF…NNDY), 39 to 198 (YKNN…YGDT), and 212 to 562 (NDYD…TNTN). 2 stretches are compositionally biased toward low complexity: residues 11–21 (YSYNGYSNNDY) and 39–123 (YKNN…ENNY). A compositionally biased stretch (polar residues) spans 124-143 (FQSENQSNKDQNSYFNSSYL). Composition is skewed to low complexity over residues 148–196 (DNYN…NSYG), 218–305 (NNNN…NGGN), 314–342 (VFNN…NNDY), and 351–562 (NIYS…TNTN). Residues 590-920 (YKVLCTVGSG…ASDALSHPFL (331 aa)) enclose the Protein kinase domain. Residues 596–604 (VGSGTFSTV) and Lys-619 each bind ATP. Catalysis depends on Asp-719, which acts as the Proton acceptor.

The protein belongs to the protein kinase superfamily. CMGC Ser/Thr protein kinase family.

It carries out the reaction L-seryl-[protein] + ATP = O-phospho-L-seryl-[protein] + ADP + H(+). It catalyses the reaction L-threonyl-[protein] + ATP = O-phospho-L-threonyl-[protein] + ADP + H(+). This Dictyostelium discoideum (Social amoeba) protein is Probable serine/threonine-protein kinase clkA (clkA).